We begin with the raw amino-acid sequence, 477 residues long: Sucrose-6-phosphate hydrolase (477 aa).

Substrate contacts are provided by residues 36 to 39 (WMND), Q55, W63, 98 to 99 (FS), 160 to 161 (RD), E215, and W298. Residue D39 is part of the active site.

Belongs to the glycosyl hydrolase 32 family.

Its subcellular location is the cytoplasm. It catalyses the reaction Hydrolysis of terminal non-reducing beta-D-fructofuranoside residues in beta-D-fructofuranosides.. Its pathway is glycan biosynthesis; sucrose metabolism. Its function is as follows. Enables the bacterium to metabolize sucrose as a sole carbon source. This Escherichia coli protein is Sucrose-6-phosphate hydrolase (cscA).